The following is a 108-amino-acid chain: ATP-dependent Clp protease adapter protein ClpS (108 aa).

Belongs to the ClpS family. Binds to the N-terminal domain of the chaperone ClpA.

In terms of biological role, involved in the modulation of the specificity of the ClpAP-mediated ATP-dependent protein degradation. This is ATP-dependent Clp protease adapter protein ClpS from Cupriavidus necator (strain ATCC 17699 / DSM 428 / KCTC 22496 / NCIMB 10442 / H16 / Stanier 337) (Ralstonia eutropha).